A 766-amino-acid polypeptide reads, in one-letter code: Flocculation suppression protein (766 aa).

Disordered regions lie at residues 1 to 52 (MSEE…HGSK), 129 to 181 (HDHS…PTKI), 203 to 247 (KRRA…SSNS), 547 to 619 (KPVP…SISG), and 657 to 766 (SVTP…KVKM). Composition is skewed to low complexity over residues 8–19 (SAPAPASTPAPA) and 134–147 (NDAN…TNDD). Residues 64–186 (IFIHKLYQIL…NPTKIWEFKH (123 aa)) mediate DNA binding. Residues 171–181 (QEKEKSNPTKI) show a composition bias toward basic and acidic residues. Positions 208–224 (SRNNSSINSRKNSSNQN) are enriched in low complexity. Serine 220 carries the phosphoserine modification. Polar residues predominate over residues 236–247 (SSIQDPSTSSNS). Position 556 is a phosphoserine (serine 556). Over residues 679–699 (AVSSNLINSPMNVEHSSSLSQ) the composition is skewed to polar residues. A compositionally biased stretch (low complexity) spans 708–719 (LPQPSLPTTSTT). A Phosphoserine modification is found at serine 733. The span at 738-750 (LLNQEDSSTSSAD) shows a compositional bias: polar residues.

The protein in the N-terminal section; belongs to the HSF family.

The protein localises to the nucleus. In terms of biological role, involved in cell surface assembly and regulation of the gene related to flocculation (asexual cell aggregation). Mutations in SFL1 causes constitutive cell aggregation. The polypeptide is Flocculation suppression protein (SFL1) (Saccharomyces cerevisiae (strain ATCC 204508 / S288c) (Baker's yeast)).